The primary structure comprises 293 residues: Thiamine-monophosphate kinase (293 aa).

Residues Glu-25, Val-39, Asp-40, Asp-68, and Asp-113 each contribute to the Mg(2+) site. ATP is bound by residues 112 to 113 and Arg-136; that span reads GD. Asp-194 is a Mg(2+) binding site. Ser-196 is a binding site for ATP. Asp-197 serves as a coordination point for Mg(2+). The substrate site is built by Glu-243 and Trp-286.

The protein belongs to the thiamine-monophosphate kinase family. In terms of assembly, homodimer.

It catalyses the reaction thiamine phosphate + ATP = thiamine diphosphate + ADP. Its pathway is cofactor biosynthesis; thiamine diphosphate biosynthesis; thiamine diphosphate from thiamine phosphate: step 1/1. Is inhibited by AMP; the mode of AMP inhibition is uncompetitive for both TMP and ATP. Its function is as follows. Catalyzes the ATP-dependent phosphorylation of thiamine-monophosphate (TMP) to form thiamine-pyrophosphate (TPP), the active form of vitamin B1. The sequence is that of Thiamine-monophosphate kinase from Pyrobaculum calidifontis (strain DSM 21063 / JCM 11548 / VA1).